A 276-amino-acid chain; its full sequence is 2,3,4,5-tetrahydropyridine-2,6-dicarboxylate N-succinyltransferase (276 aa).

2 residues coordinate substrate: Arg-104 and Asp-141.

It belongs to the transferase hexapeptide repeat family. Homotrimer.

Its subcellular location is the cytoplasm. The enzyme catalyses (S)-2,3,4,5-tetrahydrodipicolinate + succinyl-CoA + H2O = (S)-2-succinylamino-6-oxoheptanedioate + CoA. Its pathway is amino-acid biosynthesis; L-lysine biosynthesis via DAP pathway; LL-2,6-diaminopimelate from (S)-tetrahydrodipicolinate (succinylase route): step 1/3. This chain is 2,3,4,5-tetrahydropyridine-2,6-dicarboxylate N-succinyltransferase, found in Pseudoalteromonas translucida (strain TAC 125).